We begin with the raw amino-acid sequence, 190 residues long: Potassium-transporting ATPase KdpC subunit (190 aa).

A helical transmembrane segment spans residues 11–31; that stretch reads LIVLMSLITGVAYPLVVTGVA.

It belongs to the KdpC family. As to quaternary structure, the system is composed of three essential subunits: KdpA, KdpB and KdpC.

Its subcellular location is the cell inner membrane. Functionally, part of the high-affinity ATP-driven potassium transport (or Kdp) system, which catalyzes the hydrolysis of ATP coupled with the electrogenic transport of potassium into the cytoplasm. This subunit acts as a catalytic chaperone that increases the ATP-binding affinity of the ATP-hydrolyzing subunit KdpB by the formation of a transient KdpB/KdpC/ATP ternary complex. This chain is Potassium-transporting ATPase KdpC subunit, found in Pseudomonas savastanoi pv. phaseolicola (strain 1448A / Race 6) (Pseudomonas syringae pv. phaseolicola (strain 1448A / Race 6)).